Reading from the N-terminus, the 367-residue chain is Peptide chain release factor 2 (367 aa).

Position 249 is an N5-methylglutamine (Gln249).

It belongs to the prokaryotic/mitochondrial release factor family. Post-translationally, methylated by PrmC. Methylation increases the termination efficiency of RF2.

It localises to the cytoplasm. In terms of biological role, peptide chain release factor 2 directs the termination of translation in response to the peptide chain termination codons UGA and UAA. In Thermotoga sp. (strain RQ2), this protein is Peptide chain release factor 2.